We begin with the raw amino-acid sequence, 129 residues long: Large-conductance mechanosensitive channel (129 aa).

Transmembrane regions (helical) follow at residues 10–30 and 70–90; these read FAVK…GAFG and AVML…VIAI.

Belongs to the MscL family. In terms of assembly, homopentamer.

The protein localises to the cell inner membrane. Functionally, channel that opens in response to stretch forces in the membrane lipid bilayer. May participate in the regulation of osmotic pressure changes within the cell. The chain is Large-conductance mechanosensitive channel from Actinobacillus pleuropneumoniae serotype 3 (strain JL03).